Here is a 350-residue protein sequence, read N- to C-terminus: Hydroxymethylglutaryl-CoA synthase (350 aa).

The active-site Proton donor/acceptor is glutamate 83. The active-site Acyl-thioester intermediate is the cysteine 115. The (3S)-3-hydroxy-3-methylglutaryl-CoA site is built by cysteine 115 and threonine 156. Arginine 204 provides a ligand contact to CoA. Positions 206 and 239 each coordinate (3S)-3-hydroxy-3-methylglutaryl-CoA. The Proton donor/acceptor role is filled by histidine 239. Lysine 244 lines the CoA pocket. (3S)-3-hydroxy-3-methylglutaryl-CoA is bound by residues asparagine 271 and serine 301.

The protein belongs to the thiolase-like superfamily. Archaeal HMG-CoA synthase family. In terms of assembly, interacts with acetoacetyl-CoA thiolase that catalyzes the precedent step in the pathway and with a DUF35 protein. The acetoacetyl-CoA thiolase/HMG-CoA synthase complex channels the intermediate via a fused CoA-binding site, which allows for efficient coupling of the endergonic thiolase reaction with the exergonic HMGCS reaction.

It carries out the reaction acetoacetyl-CoA + acetyl-CoA + H2O = (3S)-3-hydroxy-3-methylglutaryl-CoA + CoA + H(+). Its pathway is metabolic intermediate biosynthesis; (R)-mevalonate biosynthesis; (R)-mevalonate from acetyl-CoA: step 2/3. Functionally, catalyzes the condensation of acetyl-CoA with acetoacetyl-CoA to form 3-hydroxy-3-methylglutaryl-CoA (HMG-CoA). Functions in the mevalonate (MVA) pathway leading to isopentenyl diphosphate (IPP), a key precursor for the biosynthesis of isoprenoid compounds that are building blocks of archaeal membrane lipids. This is Hydroxymethylglutaryl-CoA synthase from Thermococcus onnurineus (strain NA1).